Reading from the N-terminus, the 351-residue chain is Polyribonucleotide 5'-hydroxyl-kinase TK1956 (351 aa).

Residue Gly34–Ser41 participates in ATP binding.

A divalent metal cation serves as cofactor.

It carries out the reaction a 5'-end dephospho-2'-deoxyribonucleoside-DNA + ATP = a 5'-end 5'-phospho-2'-deoxyribonucleoside-DNA + ADP + H(+). It catalyses the reaction a 5'-end dephospho-ribonucleoside-RNA + ATP = a 5'-end 5'-phospho-ribonucleoside-RNA + ADP + H(+). In terms of biological role, polynucleotide kinase that can phosphorylate the 5'-hydroxyl groups of both single-stranded RNA (ssRNA) and single-stranded DNA (ssDNA). Exhibits a strong preference for ssRNA. This is Polyribonucleotide 5'-hydroxyl-kinase TK1956 from Thermococcus kodakarensis (strain ATCC BAA-918 / JCM 12380 / KOD1) (Pyrococcus kodakaraensis (strain KOD1)).